The following is a 444-amino-acid chain: 23S rRNA (uracil(1939)-C(5))-methyltransferase RlmD (444 aa).

The TRAM domain occupies 11 to 70 (NSIKNHILKNIKVEKLDHRGRGLAYFQNKPLFIDGALAGELLEVQIVESKKRYSKGKIKK). Cysteine 83, cysteine 89, cysteine 92, and cysteine 171 together coordinate [4Fe-4S] cluster. Positions 277, 306, 311, 327, 354, and 376 each coordinate S-adenosyl-L-methionine. Cysteine 402 functions as the Nucleophile in the catalytic mechanism.

This sequence belongs to the class I-like SAM-binding methyltransferase superfamily. RNA M5U methyltransferase family. RlmD subfamily.

It carries out the reaction uridine(1939) in 23S rRNA + S-adenosyl-L-methionine = 5-methyluridine(1939) in 23S rRNA + S-adenosyl-L-homocysteine + H(+). In terms of biological role, catalyzes the formation of 5-methyl-uridine at position 1939 (m5U1939) in 23S rRNA. The polypeptide is 23S rRNA (uracil(1939)-C(5))-methyltransferase RlmD (Psychromonas ingrahamii (strain DSM 17664 / CCUG 51855 / 37)).